Here is a 280-residue protein sequence, read N- to C-terminus: Bis(5'-nucleosyl)-tetraphosphatase, symmetrical (280 aa).

It belongs to the Ap4A hydrolase family.

The enzyme catalyses P(1),P(4)-bis(5'-adenosyl) tetraphosphate + H2O = 2 ADP + 2 H(+). In terms of biological role, hydrolyzes diadenosine 5',5'''-P1,P4-tetraphosphate to yield ADP. The polypeptide is Bis(5'-nucleosyl)-tetraphosphatase, symmetrical (Shigella flexneri serotype 5b (strain 8401)).